The primary structure comprises 339 residues: Basic membrane protein A (339 aa).

Positions 1-17 are cleaved as a signal peptide; the sequence is MNKILLLILLESIVFLS. C18 is lipidated: N-palmitoyl cysteine. C18 carries S-diacylglycerol cysteine lipidation.

Belongs to the BMP lipoprotein family. As to quaternary structure, monomer.

The protein localises to the cell inner membrane. Functionally, immunogenic protein. May be part of an ABC-type nucleoside uptake system involved in the purine salvage pathway. This is Basic membrane protein A (bmpA) from Borreliella burgdorferi (strain ATCC 35210 / DSM 4680 / CIP 102532 / B31) (Borrelia burgdorferi).